We begin with the raw amino-acid sequence, 161 residues long: MASKNSASLALFFALNILFFTLTVATNCNCKPSPKPKPVPSPKPKPVQCPPPPRPSVPSPNPRPVTPPRTPGSSGNSCPIDALKLGVCANVLSSLLNIQLGQPSSQQCCSLIQGLVDVDAAICLCTALRANVLGINLNVPISLSVLLNVCNRKLPSGFQCA.

A signal peptide spans 1 to 25 (MASKNSASLALFFALNILFFTLTVA). Residues 32–39 (PSPKPKPV) form an A-1 repeat. Positions 32 to 76 (PSPKPKPVPSPKPKPVQCPPPPRPSVPSPNPRPVTPPRTPGSSGN) are disordered. The span at 33–70 (SPKPKPVPSPKPKPVQCPPPPRPSVPSPNPRPVTPPRT) shows a compositional bias: pro residues. Residues 34-49 (PKPKPVPSPKPKPVQC) are 2 X 8 AA tandem repeats A of P-S-P-K-P-K-P-V. The A-2 repeat unit spans residues 40-47 (PSPKPKPV).

It belongs to the plant LTP family. PEARLI1 subfamily. As to quaternary structure, self-interacts and binds to DIR1. Interacts with PDLP1.

Its subcellular location is the secreted. The protein resides in the cell wall. It localises to the endoplasmic reticulum. The protein localises to the cell junction. It is found in the plasmodesma. Its subcellular location is the plastid. The protein resides in the chloroplast. Probable lipid transfer protein (LTP). Seems to control the flowering process and lignin synthesis. Together with DIR1, required for glycerol-3-phosphate- (G3P) and azelaic acid- (AA) induced systemic acquired resistance (SAR). Component of plant systemic immunity involved in priming defenses in a AA-dependent manner, by modulating production and/or translocation of a mobile signal(s) during SAR. Confers resistance to Botrytis cinerea and Pseudomonas syringae pv. tomato DC3000 and PmaDG3. May be involved in induced systemic resistance (ISR) mediated by non-pathogenic bacteria (e.g. P. fluorescens GM30). Prevents electrolyte leakage during freezing damage. The sequence is that of pEARLI1-like lipid transfer protein 1 (AZI1) from Arabidopsis thaliana (Mouse-ear cress).